The following is a 1059-amino-acid chain: RNA-binding protein 26 (1059 aa).

2 stretches are compositionally biased toward basic and acidic residues: residues 98 to 114 (EKEI…EKEK) and 130 to 147 (RHKD…DRES). A disordered region spans residues 98–275 (EKEIKKDEVN…PVDNSYASGS (178 aa)). The span at 172-182 (LNSNKVQNAKN) shows a compositional bias: polar residues. Positions 184–213 (RSRDDRKRDDRFRKREYDRNVPRRDSYRDR) are enriched in basic and acidic residues. Over residues 214 to 231 (YNRRRGRSRSYSRSRSRS) the composition is skewed to basic residues. Over residues 232–266 (WSKERQRDRDRSRSRTRSRDKDSGKPKFDLDRPDP) the composition is skewed to basic and acidic residues. The C3H1-type zinc-finger motif lies at 327 to 355 (QMQKKRCRDYDEKGFCMRGDMCPFDHGSD). The segment covering 375 to 428 (PVLEGPPPPGLPPPPSLLTPPPVNLQPPPVPPPGPLPPSLPPVTGPPPPLPPLQ) has biased composition (pro residues). The tract at residues 375 to 443 (PVLEGPPPPG…APPNSATSSV (69 aa)) is disordered. The segment covering 434 to 443 (APPNSATSSV) has biased composition (low complexity). The 75-residue stretch at 581 to 655 (TKLELRRIPP…RFIRMYWHRE (75 aa)) folds into the RRM 1 domain. Residues 771-873 (GDAQKKKQEA…LLDTELDLYN (103 aa)) adopt a coiled-coil conformation. The RRM 2 domain maps to 942–1011 (RALKISGFTE…QDLKLAWNKP (70 aa)). Residues 1010–1059 (KPVPNASSTEVEDADQEEEEFHEDSIVDDSLLQDDDEEEEDDNESRSWRR) are disordered. Acidic residues-rich tracts occupy residues 1019 to 1031 (EVED…EEFH) and 1040 to 1052 (LLQD…EDDN).

Its function is as follows. May be involved in the turnover of nuclear polyadenylated (pA+) RNA. In Xenopus laevis (African clawed frog), this protein is RNA-binding protein 26.